The chain runs to 679 residues: Glycine--tRNA ligase beta subunit (679 aa).

Belongs to the class-II aminoacyl-tRNA synthetase family. In terms of assembly, tetramer of two alpha and two beta subunits.

It localises to the cytoplasm. The catalysed reaction is tRNA(Gly) + glycine + ATP = glycyl-tRNA(Gly) + AMP + diphosphate. In Streptococcus agalactiae serotype Ia (strain ATCC 27591 / A909 / CDC SS700), this protein is Glycine--tRNA ligase beta subunit.